The sequence spans 458 residues: Retinoic acid receptor alpha (458 aa).

The modulating stretch occupies residues 1–87 (MSSKDNTCPP…PPPLPRIYKP (87 aa)). Positions 39-78 (GGLPGVQHQPPLSGYSTPSPATIETQSTSSEEIVPSPPTP) are disordered. Over residues 52–69 (GYSTPSPATIETQSTSSE) the composition is skewed to polar residues. 2 consecutive NR C4-type zinc fingers follow at residues 88–108 (CFVCQDKSSGYHYGVSACEGC) and 124–148 (CHRDKNCIINKVTRNRCQYCRLQKC). Residues 88 to 153 (CFVCQDKSSG…RLQKCFEVGM (66 aa)) constitute a DNA-binding region (nuclear receptor). The interval 154-182 (SKESVRNDRNKKKKESPKPEAIESYILSP) is hinge. In terms of domain architecture, NR LBD spans 183-417 (ETQDLIEKVQ…LIQEMLENSE (235 aa)). The 9aaTAD signature appears at 407 to 415 (PLIQEMLEN). The tract at residues 419–458 (LDTLGGGASSDAPVTPVAPGSCSPSLSPSSTHSSPSTHSP) is disordered. Residues 439 to 458 (SCSPSLSPSSTHSSPSTHSP) are compositionally biased toward low complexity.

It belongs to the nuclear hormone receptor family. NR1 subfamily. As to quaternary structure, heterodimer; with an rxr molecule. Binds DNA preferentially as a rar/rxr heterodimer.

The protein localises to the nucleus. In terms of biological role, receptor for retinoic acid. Retinoic acid receptors bind as heterodimers to their target response elements in response to their ligands, all-trans or 9-cis retinoic acid, and regulate gene expression in various biological processes. The rar/rxr heterodimers bind to the retinoic acid response elements (RARE) composed of tandem 5'-AGGTCA-3' sites known as DR1-DR5. Required for primary neurogenesis and for anteroposterior neural patterning. The chain is Retinoic acid receptor alpha (rara) from Xenopus laevis (African clawed frog).